A 261-amino-acid chain; its full sequence is Kallikrein 1-related peptidase b9 (261 aa).

A signal peptide spans M1–A18. Residues P19–R24 constitute a propeptide, activation peptide. The 234-residue stretch at I25–A258 folds into the Peptidase S1 domain. Intrachain disulfides connect C31–C173, C50–C66, C152–C219, C184–C198, and C209–C234. Residue H65 is the Charge relay system of the active site. N102 is a glycosylation site (N-linked (GlcNAc...) asparagine). D120 functions as the Charge relay system in the catalytic mechanism. The Charge relay system role is filled by S213.

This sequence belongs to the peptidase S1 family. Kallikrein subfamily.

It carries out the reaction Preferential cleavage of Arg-|-Xaa bonds in small molecule substrates. Highly selective action to release kallidin (lysyl-bradykinin) from kininogen involves hydrolysis of Met-|-Xaa or Leu-|-Xaa.. Its function is as follows. Glandular kallikreins cleave Met-Lys and Arg-Ser bonds in kininogen to release Lys-bradykinin. The chain is Kallikrein 1-related peptidase b9 (Klk1b9) from Mus musculus (Mouse).